A 75-amino-acid chain; its full sequence is Sec-independent protein translocase protein TatA (75 aa).

The chain crosses the membrane as a helical span at residues 1–21 (MGGFSIWHWLIVLVIVLLVFG). Residues 41–75 (KGMHDDDKPAGKLGDDSRTAEQAREAQAERDRDAR) are disordered.

This sequence belongs to the TatA/E family. As to quaternary structure, the Tat system comprises two distinct complexes: a TatABC complex, containing multiple copies of TatA, TatB and TatC subunits, and a separate TatA complex, containing only TatA subunits. Substrates initially bind to the TatABC complex, which probably triggers association of the separate TatA complex to form the active translocon.

The protein resides in the cell inner membrane. Part of the twin-arginine translocation (Tat) system that transports large folded proteins containing a characteristic twin-arginine motif in their signal peptide across membranes. TatA could form the protein-conducting channel of the Tat system. This is Sec-independent protein translocase protein TatA from Xanthomonas axonopodis pv. citri (strain 306).